An 89-amino-acid polypeptide reads, in one-letter code: Small ribosomal subunit protein uS15 (89 aa).

It belongs to the universal ribosomal protein uS15 family. As to quaternary structure, part of the 30S ribosomal subunit. Forms a bridge to the 50S subunit in the 70S ribosome, contacting the 23S rRNA.

Its function is as follows. One of the primary rRNA binding proteins, it binds directly to 16S rRNA where it helps nucleate assembly of the platform of the 30S subunit by binding and bridging several RNA helices of the 16S rRNA. Functionally, forms an intersubunit bridge (bridge B4) with the 23S rRNA of the 50S subunit in the ribosome. This is Small ribosomal subunit protein uS15 from Acidithiobacillus ferrooxidans (strain ATCC 23270 / DSM 14882 / CIP 104768 / NCIMB 8455) (Ferrobacillus ferrooxidans (strain ATCC 23270)).